We begin with the raw amino-acid sequence, 578 residues long: Protein BONZAI 1 (578 aa).

Glycine 2 carries the N-myristoyl glycine lipid modification. 2 consecutive C2 domains span residues 26 to 163 and 176 to 303; these read ALGA…TSTL and QPHH…NFSL. 4 residues coordinate Ca(2+): aspartate 63, aspartate 69, aspartate 122, and aspartate 124. The region spanning 341 to 560 is the VWFA domain; it reads NFMVAIDFTA…SVVQALLAEL (220 aa).

It belongs to the copine family. Interacts (via VWA domain) with BAP1 and BAP2. Interacts with HSP70-1 and HSP70-2. Ca(2+) serves as cofactor. Post-translationally, based on mass spectrometry analysis, the N-peptide must be modified and there might be additional modifications other than myristoylation. Expressed in roots and flowers and, at higher levels, in leaves and stems. Strongly expressed in growing tissues. Not detected in green siliques.

The protein localises to the cell membrane. Functionally, negative regulator of cell death and defense responses. Negative regulator of several R genes, including SNC1. May have effects in promoting growth and development. May function in membrane trafficking and in fusion of vesicles with plasma membrane at low temperature. Exhibits calcium-dependent phospholipid binding properties. The sequence is that of Protein BONZAI 1 (BON1) from Arabidopsis thaliana (Mouse-ear cress).